The chain runs to 354 residues: Sulfate/thiosulfate import ATP-binding protein CysA (354 aa).

The region spanning 3 to 237 (IEVRGLSKRF…PATPFVYGFL (235 aa)) is the ABC transporter domain. Position 35–42 (35–42 (GPSGCGKT)) interacts with ATP.

The protein belongs to the ABC transporter superfamily. Sulfate/tungstate importer (TC 3.A.1.6) family. In terms of assembly, the complex is composed of two ATP-binding proteins (CysA), two transmembrane proteins (CysT and CysW) and a solute-binding protein (CysP).

It is found in the cell inner membrane. The catalysed reaction is sulfate(out) + ATP + H2O = sulfate(in) + ADP + phosphate + H(+). It carries out the reaction thiosulfate(out) + ATP + H2O = thiosulfate(in) + ADP + phosphate + H(+). Functionally, part of the ABC transporter complex CysAWTP involved in sulfate/thiosulfate import. Responsible for energy coupling to the transport system. The chain is Sulfate/thiosulfate import ATP-binding protein CysA from Bordetella parapertussis (strain 12822 / ATCC BAA-587 / NCTC 13253).